The sequence spans 262 residues: Hydroxyethylthiazole kinase (262 aa).

Methionine 39 provides a ligand contact to substrate. ATP-binding residues include lysine 115 and threonine 160. Glycine 187 is a binding site for substrate.

Belongs to the Thz kinase family. Mg(2+) serves as cofactor.

The enzyme catalyses 5-(2-hydroxyethyl)-4-methylthiazole + ATP = 4-methyl-5-(2-phosphooxyethyl)-thiazole + ADP + H(+). It functions in the pathway cofactor biosynthesis; thiamine diphosphate biosynthesis; 4-methyl-5-(2-phosphoethyl)-thiazole from 5-(2-hydroxyethyl)-4-methylthiazole: step 1/1. Catalyzes the phosphorylation of the hydroxyl group of 4-methyl-5-beta-hydroxyethylthiazole (THZ). This Staphylococcus epidermidis (strain ATCC 12228 / FDA PCI 1200) protein is Hydroxyethylthiazole kinase.